We begin with the raw amino-acid sequence, 303 residues long: Nucleotide-binding protein SAB0719 (303 aa).

18–25 (GLSGAGKS) is an ATP binding site. 69–72 (DLRG) serves as a coordination point for GTP.

This sequence belongs to the RapZ-like family.

Its function is as follows. Displays ATPase and GTPase activities. This Staphylococcus aureus (strain bovine RF122 / ET3-1) protein is Nucleotide-binding protein SAB0719.